Here is a 130-residue protein sequence, read N- to C-terminus: Small ribosomal subunit protein uS11 (130 aa).

The disordered stretch occupies residues 108-130; that stretch reads IEDVTPIPHDGTGRPGGKRGRRV.

The protein belongs to the universal ribosomal protein uS11 family. In terms of assembly, part of the 30S ribosomal subunit.

Located on the platform of the 30S subunit. The protein is Small ribosomal subunit protein uS11 of Methanothermobacter thermautotrophicus (strain ATCC 29096 / DSM 1053 / JCM 10044 / NBRC 100330 / Delta H) (Methanobacterium thermoautotrophicum).